The primary structure comprises 230 residues: RNA-binding protein 24 (230 aa).

The RRM domain maps to 11–88; the sequence is TKIFVGGLPY…RKANVNLAYL (78 aa).

The protein resides in the nucleus. It localises to the cytoplasm. Multifunctional RNA-binding protein involved in the regulation of pre-mRNA splicing, mRNA stability and mRNA translation important for cell fate decision and differentiation. Plays a major role in pre-mRNA alternative splicing regulation. Mediates preferentially muscle-specific exon inclusion in numerous mRNAs important for striated cardiac and skeletal muscle cell differentiation. Binds to intronic splicing enhancer (ISE) composed of stretches of GU-rich motifs localized in flanking intron of exon that will be included by alternative splicing. Involved in embryonic stem cell (ESC) transition to cardiac cell differentiation by promoting pre-mRNA alternative splicing events of several pluripotency and/or differentiation genes. Plays a role in the regulation of mRNA stability and mRNA translation to which it is bound. Involved in myogenic differentiation by regulating myog levels. Binds to a huge amount of mRNAs. Required for embryonic heart development, sarcomer and M-band formation in striated muscles. In Danio rerio (Zebrafish), this protein is RNA-binding protein 24 (rbm24).